We begin with the raw amino-acid sequence, 197 residues long: Recombination protein RecR (197 aa).

Residues 56–71 (CVRCFSLTDAETCNFC) form a C4-type zinc finger. Positions 79-174 (RVLCVVETFA…RVTRIAQGLP (96 aa)) constitute a Toprim domain.

Belongs to the RecR family.

Its function is as follows. May play a role in DNA repair. It seems to be involved in an RecBC-independent recombinational process of DNA repair. It may act with RecF and RecO. In Myxococcus xanthus (strain DK1622), this protein is Recombination protein RecR.